A 429-amino-acid chain; its full sequence is Glutamate-1-semialdehyde 2,1-aminomutase 1 (429 aa).

Lys268 bears the N6-(pyridoxal phosphate)lysine mark.

The protein belongs to the class-III pyridoxal-phosphate-dependent aminotransferase family. HemL subfamily. In terms of assembly, homodimer. Pyridoxal 5'-phosphate serves as cofactor.

Its subcellular location is the cytoplasm. The catalysed reaction is (S)-4-amino-5-oxopentanoate = 5-aminolevulinate. The protein operates within porphyrin-containing compound metabolism; protoporphyrin-IX biosynthesis; 5-aminolevulinate from L-glutamyl-tRNA(Glu): step 2/2. The chain is Glutamate-1-semialdehyde 2,1-aminomutase 1 from Listeria monocytogenes serotype 4b (strain F2365).